Reading from the N-terminus, the 115-residue chain is Protein Wnt-2 (115 aa).

The O-palmitoleoyl serine; by PORCN moiety is linked to residue Ser1. Cys81 and Cys96 form a disulfide bridge. Asn82 is a glycosylation site (N-linked (GlcNAc...) asparagine).

It belongs to the Wnt family. Palmitoleoylation is required for efficient binding to frizzled receptors. Depalmitoleoylation leads to Wnt signaling pathway inhibition.

It localises to the secreted. It is found in the extracellular space. The protein localises to the extracellular matrix. Its function is as follows. Ligand for members of the frizzled family of seven transmembrane receptors. Probable developmental protein. May be a signaling molecule which affects the development of discrete regions of tissues. Is likely to signal over only few cell diameters. The protein is Protein Wnt-2 (WNT-2) of Strongylocentrotus purpuratus (Purple sea urchin).